Reading from the N-terminus, the 485-residue chain is Cysteine--tRNA ligase (485 aa).

C29 serves as a coordination point for Zn(2+). Residues 31–41 (ATVQGMPHVGH) carry the 'HIGH' region motif. Residues 174–198 (QRVEDMQDAPDADPRGKRDPHDFAL) are disordered. The span at 185–197 (ADPRGKRDPHDFA) shows a compositional bias: basic and acidic residues. Zn(2+) contacts are provided by C227, H252, and E256. Residues 283 to 287 (KMSKS) carry the 'KMSKS' region motif. Residue K286 participates in ATP binding.

The protein belongs to the class-I aminoacyl-tRNA synthetase family. As to quaternary structure, monomer. The cofactor is Zn(2+).

The protein resides in the cytoplasm. The enzyme catalyses tRNA(Cys) + L-cysteine + ATP = L-cysteinyl-tRNA(Cys) + AMP + diphosphate. This chain is Cysteine--tRNA ligase, found in Micrococcus luteus (strain ATCC 4698 / DSM 20030 / JCM 1464 / CCM 169 / CCUG 5858 / IAM 1056 / NBRC 3333 / NCIMB 9278 / NCTC 2665 / VKM Ac-2230) (Micrococcus lysodeikticus).